Here is a 95-residue protein sequence, read N- to C-terminus: FXYD domain-containing ion transport regulator 6 (95 aa).

The N-terminal stretch at 1 to 18 is a signal peptide; sequence MEVVLLFLCGLLAPAVLA. The Extracellular portion of the chain corresponds to 19–35; it reads SATEQEKEKDPFHYDYQ. Residues 36-58 traverse the membrane as a helical segment; that stretch reads TLRIGGLVFAVVLFSVGILLILS. The Cytoplasmic segment spans residues 59-95; it reads RRCKCSFNQKPRAPGDEEAQVENLVTANATEPQKAEN. The tract at residues 69–95 is disordered; sequence PRAPGDEEAQVENLVTANATEPQKAEN.

Belongs to the FXYD family. Regulatory subunit of the sodium/potassium-transporting ATPase which is composed of a catalytic alpha subunit, a non-catalytic beta subunit and an additional regulatory subunit. The regulatory subunit, a member of the FXYD protein family, modulates the enzymatic activity in a tissue- and isoform-specific way by changing affinities of the Na+/K+-ATPase toward Na(+), K(+) or ATP.

The protein resides in the cell membrane. Associates with and regulates the activity of the sodium/potassium-transporting ATPase (NKA) which catalyzes the hydrolysis of ATP coupled with the exchange of Na(+) and K(+) ions across the plasma membrane. Reduces the apparent affinity for intracellular Na(+) with no change in the apparent affinity for extracellular K(+). In addition to modulating NKA kinetics, may also function as a regulator of NKA localization to the plasma membrane. In Bos taurus (Bovine), this protein is FXYD domain-containing ion transport regulator 6 (FXYD6).